The sequence spans 436 residues: Prenyltransferase nscD (436 aa).

This sequence belongs to the tryptophan dimethylallyltransferase family.

Its pathway is secondary metabolite biosynthesis. Prenyltransferase; part of the gene cluster that mediates the biosynthesis of neosartoricin B, a prenylated anthracenone that probably exhibits T-cell antiproliferative activity, suggestive of a physiological role as an immunosuppressive agent. The non-reducing polyketide synthase nscA probably synthesizes and cyclizes the decaketide backbone. The hydrolase nscB then mediates the product release through hydrolysis followed by spontaneous decarboxylation. The prenyltransferase nscD catalyzes the addition of the dimethylallyl group to the aromatic C5. The FAD-dependent monooxygenase nscC is then responsible for the stereospecific hydroxylation at C2. Neosartoricin B can be converted into two additional compounds neosartoricins C and D. Neosartoricin C is a spirocyclic compound that is cyclized through the attack of C3 hydroxyl on C14, followed by dehydration. On the other hand, neosartoricin D is a further cyclized compound in which attack of C2 on C14 in neosartoricin C results in the formation of the acetal-containing dioxabicyclo-octanone ring. Both of these compounds are novel and possibly represent related metabolites of the gene cluster. The polypeptide is Prenyltransferase nscD (Arthroderma gypseum (strain ATCC MYA-4604 / CBS 118893) (Microsporum gypseum)).